Consider the following 109-residue polypeptide: Large ribosomal subunit protein uL22 (109 aa).

Over residues 84 to 95 the composition is skewed to basic residues; the sequence is ARGTASRIRKPT. The tract at residues 84 to 109 is disordered; sequence ARGTASRIRKPTSHIMVEVSKPSKEA.

This sequence belongs to the universal ribosomal protein uL22 family. In terms of assembly, part of the 50S ribosomal subunit.

Functionally, this protein binds specifically to 23S rRNA; its binding is stimulated by other ribosomal proteins, e.g. L4, L17, and L20. It is important during the early stages of 50S assembly. It makes multiple contacts with different domains of the 23S rRNA in the assembled 50S subunit and ribosome. The globular domain of the protein is located near the polypeptide exit tunnel on the outside of the subunit, while an extended beta-hairpin is found that lines the wall of the exit tunnel in the center of the 70S ribosome. The protein is Large ribosomal subunit protein uL22 of Campylobacter hominis (strain ATCC BAA-381 / DSM 21671 / CCUG 45161 / LMG 19568 / NCTC 13146 / CH001A).